The following is a 199-amino-acid chain: UPF0301 protein Rfer_1377 (199 aa).

It belongs to the UPF0301 (AlgH) family.

The chain is UPF0301 protein Rfer_1377 from Albidiferax ferrireducens (strain ATCC BAA-621 / DSM 15236 / T118) (Rhodoferax ferrireducens).